The primary structure comprises 543 residues: CTP synthase (543 aa).

The amidoligase domain stretch occupies residues 1–265 (MARYIFITGG…DEEVLAAFGI (265 aa)). Residue S13 coordinates CTP. S13 is a binding site for UTP. 14–19 (SLGKGL) is a binding site for ATP. Y54 serves as a coordination point for L-glutamine. An ATP-binding site is contributed by D71. Mg(2+) is bound by residues D71 and E139. CTP-binding positions include 146 to 148 (DIE), 186 to 191 (KTKPTQ), and K222. UTP-binding positions include 186–191 (KTKPTQ) and K222. Residue 238-240 (RDA) participates in ATP binding. The 252-residue stretch at 291–542 (TIAIVGKYTG…IEAAMAQSRL (252 aa)) folds into the Glutamine amidotransferase type-1 domain. G353 is a binding site for L-glutamine. The active-site Nucleophile; for glutamine hydrolysis is the C380. Residues 381 to 384 (FGMQ), E404, and R470 contribute to the L-glutamine site. Active-site residues include H515 and E517.

This sequence belongs to the CTP synthase family. In terms of assembly, homotetramer.

The enzyme catalyses UTP + L-glutamine + ATP + H2O = CTP + L-glutamate + ADP + phosphate + 2 H(+). The catalysed reaction is L-glutamine + H2O = L-glutamate + NH4(+). It catalyses the reaction UTP + NH4(+) + ATP = CTP + ADP + phosphate + 2 H(+). Its pathway is pyrimidine metabolism; CTP biosynthesis via de novo pathway; CTP from UDP: step 2/2. Allosterically activated by GTP, when glutamine is the substrate; GTP has no effect on the reaction when ammonia is the substrate. The allosteric effector GTP functions by stabilizing the protein conformation that binds the tetrahedral intermediate(s) formed during glutamine hydrolysis. Inhibited by the product CTP, via allosteric rather than competitive inhibition. Functionally, catalyzes the ATP-dependent amination of UTP to CTP with either L-glutamine or ammonia as the source of nitrogen. Regulates intracellular CTP levels through interactions with the four ribonucleotide triphosphates. This Rhodopseudomonas palustris (strain BisA53) protein is CTP synthase.